We begin with the raw amino-acid sequence, 490 residues long: Cardiolipin synthase 1 (490 aa).

2 helical membrane passes run 9–29 (ILTI…FVII) and 42–62 (WAWL…YLFL). PLD phosphodiesterase domains lie at 225–252 (MNNR…GDDY) and 403–430 (QNGF…DFRS). Residues His-230, Lys-232, Asp-237, His-408, Lys-410, and Asp-415 contribute to the active site.

This sequence belongs to the phospholipase D family. Cardiolipin synthase subfamily.

Its subcellular location is the cell membrane. The enzyme catalyses 2 a 1,2-diacyl-sn-glycero-3-phospho-(1'-sn-glycerol) = a cardiolipin + glycerol. Catalyzes the reversible phosphatidyl group transfer from one phosphatidylglycerol molecule to another to form cardiolipin (CL) (diphosphatidylglycerol) and glycerol. The protein is Cardiolipin synthase 1 (cls1) of Staphylococcus epidermidis (strain ATCC 35984 / DSM 28319 / BCRC 17069 / CCUG 31568 / BM 3577 / RP62A).